Reading from the N-terminus, the 204-residue chain is Holliday junction branch migration complex subunit RuvA (204 aa).

The tract at residues 1–64 is domain I; that stretch reads MIGKLKGTID…EDQLKLFGFM (64 aa). The interval 65–143 is domain II; it reads TALEREWFNL…AYAGEAINIA (79 aa). The flexible linker stretch occupies residues 144-151; sequence LKRELGEG. Positions 152–204 are domain III; the sequence is VAAAPVADAVSALTNLGYSRDQAANAVAAAMKTAGEGADSAKLIRLGLKELAR.

The protein belongs to the RuvA family. As to quaternary structure, homotetramer. Forms an RuvA(8)-RuvB(12)-Holliday junction (HJ) complex. HJ DNA is sandwiched between 2 RuvA tetramers; dsDNA enters through RuvA and exits via RuvB. An RuvB hexamer assembles on each DNA strand where it exits the tetramer. Each RuvB hexamer is contacted by two RuvA subunits (via domain III) on 2 adjacent RuvB subunits; this complex drives branch migration. In the full resolvosome a probable DNA-RuvA(4)-RuvB(12)-RuvC(2) complex forms which resolves the HJ.

The protein localises to the cytoplasm. Its function is as follows. The RuvA-RuvB-RuvC complex processes Holliday junction (HJ) DNA during genetic recombination and DNA repair, while the RuvA-RuvB complex plays an important role in the rescue of blocked DNA replication forks via replication fork reversal (RFR). RuvA specifically binds to HJ cruciform DNA, conferring on it an open structure. The RuvB hexamer acts as an ATP-dependent pump, pulling dsDNA into and through the RuvAB complex. HJ branch migration allows RuvC to scan DNA until it finds its consensus sequence, where it cleaves and resolves the cruciform DNA. This Rhizobium etli (strain ATCC 51251 / DSM 11541 / JCM 21823 / NBRC 15573 / CFN 42) protein is Holliday junction branch migration complex subunit RuvA.